The primary structure comprises 280 residues: Polyamine aminopropyltransferase (280 aa).

A PABS domain is found at 2–235; sequence GGWIDEEHRG…GWWSWTFAAV (234 aa). An S-methyl-5'-thioadenosine-binding site is contributed by Gln29. Spermidine is bound by residues His60 and Asp84. S-methyl-5'-thioadenosine contacts are provided by residues Glu104 and 136-137; that span reads DG. The active-site Proton acceptor is Asp155. Pro162 serves as a coordination point for S-methyl-5'-thioadenosine.

Belongs to the spermidine/spermine synthase family. In terms of assembly, homodimer or homotetramer.

It is found in the cytoplasm. The catalysed reaction is S-adenosyl 3-(methylsulfanyl)propylamine + putrescine = S-methyl-5'-thioadenosine + spermidine + H(+). Its pathway is amine and polyamine biosynthesis; spermidine biosynthesis; spermidine from putrescine: step 1/1. Its function is as follows. Catalyzes the irreversible transfer of a propylamine group from the amino donor S-adenosylmethioninamine (decarboxy-AdoMet) to putrescine (1,4-diaminobutane) to yield spermidine. This chain is Polyamine aminopropyltransferase, found in Parasynechococcus marenigrum (strain WH8102).